A 231-amino-acid polypeptide reads, in one-letter code: Ribose-5-phosphate isomerase A (231 aa).

Residues 31–34 (SGST), 87–90 (DGAD), and 100–103 (KGGG) each bind substrate. Residue Glu109 is the Proton acceptor of the active site. Lys127 is a substrate binding site.

This sequence belongs to the ribose 5-phosphate isomerase family. Homodimer.

It catalyses the reaction aldehydo-D-ribose 5-phosphate = D-ribulose 5-phosphate. It participates in carbohydrate degradation; pentose phosphate pathway; D-ribose 5-phosphate from D-ribulose 5-phosphate (non-oxidative stage): step 1/1. In terms of biological role, catalyzes the reversible conversion of ribose-5-phosphate to ribulose 5-phosphate. This chain is Ribose-5-phosphate isomerase A, found in Chlamydia pneumoniae (Chlamydophila pneumoniae).